The primary structure comprises 159 residues: Globin C, coelomic (159 aa).

An N-acetylglycine modification is found at Gly-2. The Globin domain occupies 12 to 158 (DLTLAQKKIV…VQAVLLVKHG (147 aa)). 2 residues coordinate heme b: His-74 and His-105.

It belongs to the globin family. Monomer.

The chain is Globin C, coelomic from Molpadia arenicola (Sea cucumber).